The chain runs to 86 residues: Small ribosomal subunit protein bS16 (86 aa).

Belongs to the bacterial ribosomal protein bS16 family.

The chain is Small ribosomal subunit protein bS16 from Xylella fastidiosa (strain 9a5c).